The chain runs to 792 residues: Phenylalanine--tRNA ligase beta subunit (792 aa).

A tRNA-binding domain is found at 39–147 (ARTLEKVVVG…ADAPIGKNIQ (109 aa)). Residues 400-475 (PKIPRIILRP…HLYGYDRIPQ (76 aa)) enclose the B5 domain. Mg(2+) is bound by residues Asp453, Asp459, Glu462, and Glu463. One can recognise an FDX-ACB domain in the interval 697 to 791 (SKFPSIRRDI…LERKFNAKLR (95 aa)).

Belongs to the phenylalanyl-tRNA synthetase beta subunit family. Type 1 subfamily. Tetramer of two alpha and two beta subunits. The cofactor is Mg(2+).

The protein resides in the cytoplasm. It catalyses the reaction tRNA(Phe) + L-phenylalanine + ATP = L-phenylalanyl-tRNA(Phe) + AMP + diphosphate + H(+). In Coxiella burnetii (strain RSA 493 / Nine Mile phase I), this protein is Phenylalanine--tRNA ligase beta subunit.